A 97-amino-acid polypeptide reads, in one-letter code: Large ribosomal subunit protein eL21 (97 aa).

The segment at 1–24 (MQKSEGFRSKTRYKLQKHPRQKGM) is disordered. Over residues 9 to 21 (SKTRYKLQKHPRQ) the composition is skewed to basic residues.

This sequence belongs to the eukaryotic ribosomal protein eL21 family.

The sequence is that of Large ribosomal subunit protein eL21 from Methanococcus maripaludis (strain DSM 14266 / JCM 13030 / NBRC 101832 / S2 / LL).